Consider the following 242-residue polypeptide: Uridylate kinase (242 aa).

12–15 (KLSG) lines the ATP pocket. Positions 20–25 (GEKGYG) are involved in allosteric activation by GTP. Glycine 55 contributes to the UMP binding site. ATP contacts are provided by glycine 56 and arginine 60. UMP is bound by residues aspartate 75 and 136 to 143 (TGNPYFST). Residues tyrosine 169 and aspartate 172 each contribute to the ATP site.

It belongs to the UMP kinase family. In terms of assembly, homohexamer.

The protein localises to the cytoplasm. The enzyme catalyses UMP + ATP = UDP + ADP. Its pathway is pyrimidine metabolism; CTP biosynthesis via de novo pathway; UDP from UMP (UMPK route): step 1/1. Allosterically activated by GTP. Inhibited by UTP. Its function is as follows. Catalyzes the reversible phosphorylation of UMP to UDP. The sequence is that of Uridylate kinase from Carboxydothermus hydrogenoformans (strain ATCC BAA-161 / DSM 6008 / Z-2901).